The sequence spans 124 residues: Small ribosomal subunit protein uS12 (124 aa).

The residue at position 89 (Asp89) is a 3-methylthioaspartic acid. The interval 104-124 is disordered; sequence TQGVKNRGQARSRYGAKKEKK. A compositionally biased stretch (basic residues) spans 111–124; that stretch reads GQARSRYGAKKEKK.

It belongs to the universal ribosomal protein uS12 family. In terms of assembly, part of the 30S ribosomal subunit. Contacts proteins S8 and S17. May interact with IF1 in the 30S initiation complex.

With S4 and S5 plays an important role in translational accuracy. Functionally, interacts with and stabilizes bases of the 16S rRNA that are involved in tRNA selection in the A site and with the mRNA backbone. Located at the interface of the 30S and 50S subunits, it traverses the body of the 30S subunit contacting proteins on the other side and probably holding the rRNA structure together. The combined cluster of proteins S8, S12 and S17 appears to hold together the shoulder and platform of the 30S subunit. This chain is Small ribosomal subunit protein uS12, found in Micrococcus luteus (strain ATCC 4698 / DSM 20030 / JCM 1464 / CCM 169 / CCUG 5858 / IAM 1056 / NBRC 3333 / NCIMB 9278 / NCTC 2665 / VKM Ac-2230) (Micrococcus lysodeikticus).